Here is a 213-residue protein sequence, read N- to C-terminus: GTP cyclohydrolase 1 (213 aa).

The Zn(2+) site is built by Cys104, His107, and Cys175.

The protein belongs to the GTP cyclohydrolase I family. In terms of assembly, homomer.

The catalysed reaction is GTP + H2O = 7,8-dihydroneopterin 3'-triphosphate + formate + H(+). The protein operates within cofactor biosynthesis; 7,8-dihydroneopterin triphosphate biosynthesis; 7,8-dihydroneopterin triphosphate from GTP: step 1/1. The chain is GTP cyclohydrolase 1 from Brucella suis (strain ATCC 23445 / NCTC 10510).